The sequence spans 99 residues: NADH-ubiquinone oxidoreductase chain 2 (99 aa).

Transmembrane regions (helical) follow at residues 22-42 and 65-85; these read FLTF…IQII and VMIS…SIFI.

This sequence belongs to the complex I subunit 2 family.

It localises to the mitochondrion inner membrane. The enzyme catalyses a ubiquinone + NADH + 5 H(+)(in) = a ubiquinol + NAD(+) + 4 H(+)(out). Core subunit of the mitochondrial membrane respiratory chain NADH dehydrogenase (Complex I) that is believed to belong to the minimal assembly required for catalysis. Complex I functions in the transfer of electrons from NADH to the respiratory chain. The immediate electron acceptor for the enzyme is believed to be ubiquinone. The sequence is that of NADH-ubiquinone oxidoreductase chain 2 (ND2) from Cyanidium caldarium (Red alga).